Reading from the N-terminus, the 155-residue chain is uncharacterized protein (155 aa).

Positions 135 to 155 (SQANSKNDSNSKDDLPNPFSV) are disordered.

This is an uncharacterized protein from Acidianus convivator (ATV).